A 313-amino-acid polypeptide reads, in one-letter code: UDP-N-acetylglucosamine 3-dehydrogenase (313 aa).

The NAD(+) site is built by histidine 13, leucine 14, and arginine 38.

It belongs to the Gfo/Idh/MocA family. Exists in multiple oligomeric states.

It catalyses the reaction UDP-N-acetyl-alpha-D-glucosamine + NAD(+) = UDP-2-acetamido-3-dehydro-2-deoxy-alpha-D-glucopyranose + NADH + H(+). It functions in the pathway bacterial outer membrane biogenesis; LPS lipid A biosynthesis. Oxidoreductase involved in the synthesis of 2,3-diamino-2,3-dideoxy-D-glucopyranose (GlcN3N), which is a component of lipid A in some species. Catalyzes the NAD(+)-dependent oxidation of the glucosamine 3-position of UDP-N-acetyl-glucosamine (UDP-GlcNAc) to a ketone moiety, forming UDP-2-acetamido-3-dehydro-2-deoxy-alpha-D-glucopyranose (UDP-3-oxo-GlcNAc). Is specific for UDP-GlcNAc, no activity is observed with UDP-glucose (UDP-Glc), UDP-glucoronic acid (UDP-GlcA), UDP-galactose (UDP-Gal) and UDP-N-acetylgalactosamine (UDP-GalNAc). Cannot use FAD(+) and NADP(+). This is UDP-N-acetylglucosamine 3-dehydrogenase from Acidithiobacillus ferrooxidans (strain ATCC 23270 / DSM 14882 / CIP 104768 / NCIMB 8455) (Ferrobacillus ferrooxidans (strain ATCC 23270)).